The chain runs to 1133 residues: uncharacterized protein (1133 aa).

Disordered stretches follow at residues 33 to 83 (QFED…NSSS), 305 to 629 (PVSN…NSNS), 679 to 723 (GKLD…SVKR), and 736 to 817 (IESP…SEEV). Over residues 39-83 (NNNNSNNNNNNNNSNNNNSNNNENINRKTGSTLLSSSTSQLNSSS) the composition is skewed to low complexity. A DNA-binding region (NDT80) is located at residues 40–308 (NNNSNNNNNN…GHPTCNPVSN (269 aa)). The segment covering 305–316 (PVSNNPSTPGTP) has biased composition (polar residues). Residues 317-384 (ISNFDSSNNN…NNNSSGNSSS (68 aa)) show a composition bias toward low complexity. Positions 401 to 417 (INSLSNHNSPHLTPIQY) are enriched in polar residues. A compositionally biased stretch (low complexity) spans 418–452 (NNNNNNSNNNSNNNNNNNNNNNNSNNNNNNSNNNN). The span at 453–470 (HQFQSNNRIFKGNLSNPF) shows a compositional bias: polar residues. Low complexity-rich tracts occupy residues 473–615 (NYSQ…GNNS) and 686–714 (NNSNNNSSNNNNSNNNSSNNNSNNNNNNN). A compositionally biased stretch (polar residues) spans 736 to 747 (IESPQSYISSPT). Pro residues predominate over residues 757–771 (QPQPQPQPQPQPQPQ). Over residues 772–808 (PQSQSQSQSQSQSQSQSQSQSQSQPIQQIVQQQLSSP) the composition is skewed to low complexity. Residues 909–1020 (SDKRVKENVK…KKVDNVCMEL (112 aa)) form the Peptidase S74 domain. Residues 1055 to 1075 (IFIGIGVFTLFVIFGLVAVSI) form a helical membrane-spanning segment. Positions 1107-1133 (SGSNSCYDSSSNSAIDTTTSTGSGSIK) are disordered.

The protein localises to the membrane. This is an uncharacterized protein from Dictyostelium discoideum (Social amoeba).